Reading from the N-terminus, the 279-residue chain is tRNA (carboxymethyluridine(34)-5-O)-methyltransferase (279 aa).

The interval 172 to 236 (KSKSKPKTKS…QQQDQEQERE (65 aa)) is disordered. Residues 200-229 (PKERSEYLQRWKEEQQRSKSLDDNDEKQQQ) are compositionally biased toward basic and acidic residues.

In terms of assembly, interacts with TRM112.

It is found in the cytoplasm. Its subcellular location is the nucleus. The enzyme catalyses 5-(carboxymethyl)uridine(34) in tRNA + S-adenosyl-L-methionine = 5-(2-methoxy-2-oxoethyl)uridine(34) in tRNA + S-adenosyl-L-homocysteine. In terms of biological role, required for the methylation of the wobble bases at position 34 in tRNA. Appears to have a role in stress-response. The polypeptide is tRNA (carboxymethyluridine(34)-5-O)-methyltransferase (TRM9) (Saccharomyces cerevisiae (strain ATCC 204508 / S288c) (Baker's yeast)).